The primary structure comprises 1269 residues: Furin-like protease 1, isoforms 1/1-X/2 (1269 aa).

The tract at residues Met1–Ser57 is disordered. Positions Thr13–Asn28 are enriched in low complexity. N-linked (GlcNAc...) asparagine glycans are attached at residues Asn15, Asn18, and Asn28. Polar residues predominate over residues Asn38–Ser57. Asn108 carries an N-linked (GlcNAc...) asparagine glycan. Residues Val119–Phe139 traverse the membrane as a helical segment. The segment covering Ser150–Pro163 has biased composition (low complexity). Positions Ser150–Gly187 are disordered. Over residues Ser164–Ser178 the composition is skewed to pro residues. Asn333 carries N-linked (GlcNAc...) asparagine glycosylation. Positions Met340–Val654 constitute a Peptidase S8 domain. Residues Asp372 and His413 each act as charge relay system in the active site. A glycan (N-linked (GlcNAc...) asparagine) is linked at Asn426. 2 disulfide bridges follow: Cys430–Cys579 and Cys522–Cys552. The Charge relay system role is filled by Ser587. N-linked (GlcNAc...) asparagine glycosylation is present at Asn606. A P/Homo B domain is found at Ala662–Ser793. Residues Cys669 and Cys695 are joined by a disulfide bond. N-linked (GlcNAc...) asparagine glycans are attached at residues Asn727 and Asn814. 4 disordered regions span residues Pro796–Gln875, Ala891–Ile1015, Glu1031–Gly1050, and Leu1057–Thr1083. Composition is skewed to low complexity over residues Thr811–Asn821 and Pro835–Gly851. N-linked (GlcNAc...) asparagine glycosylation is present at Asn857. Over residues Lys858–Leu868 the composition is skewed to polar residues. Residues Asn897 and Asn908 are each glycosylated (N-linked (GlcNAc...) asparagine). Low complexity-rich tracts occupy residues Asn905–Lys915 and Thr929–Ser940. Over residues Lys975 to Val985 the composition is skewed to basic and acidic residues. Asn994 carries N-linked (GlcNAc...) asparagine glycosylation. The span at Glu1005–Arg1014 shows a compositional bias: polar residues. Polar residues predominate over residues Asn1062–Ser1074. The chain crosses the membrane as a helical span at residues Leu1233–Ala1253.

The protein belongs to the peptidase S8 family. Furin subfamily. The cofactor is Ca(2+). In terms of tissue distribution, in adults, isoform 1-X is expressed in CNS, fat body and female reproductive tissues, and in embryos, in CNS, tracheal pits, hindgut, posterior spiracles and anal pads.

The protein resides in the golgi apparatus membrane. The enzyme catalyses Release of mature proteins from their proproteins by cleavage of -Arg-Xaa-Yaa-Arg-|-Zaa- bonds, where Xaa can be any amino acid and Yaa is Arg or Lys. Releases albumin, complement component C3 and von Willebrand factor from their respective precursors.. Furin is likely to represent the ubiquitous endoprotease activity within constitutive secretory pathways and capable of cleavage at the RX(K/R)R consensus motif. This chain is Furin-like protease 1, isoforms 1/1-X/2 (Fur1), found in Drosophila melanogaster (Fruit fly).